We begin with the raw amino-acid sequence, 149 residues long: Ribonuclease H (149 aa).

Residues 1–141 (MKTVTLFSDG…CDTMAREKAT (141 aa)) enclose the RNase H type-1 domain. Positions 9, 47, 69, and 133 each coordinate Mg(2+).

It belongs to the RNase H family. As to quaternary structure, monomer. The cofactor is Mg(2+).

Its subcellular location is the cytoplasm. The catalysed reaction is Endonucleolytic cleavage to 5'-phosphomonoester.. Endonuclease that specifically degrades the RNA of RNA-DNA hybrids. The protein is Ribonuclease H of Campylobacter curvus (strain 525.92).